Here is a 492-residue protein sequence, read N- to C-terminus: Phosphatidylinositol-glycan biosynthesis class W protein (492 aa).

5 consecutive transmembrane segments (helical) span residues 26–46 (FILT…ATFF), 59–79 (FILE…FTEL), 82–102 (FLIV…QKNV), 127–147 (YRAF…FQVF), and 156–176 (TYGI…GALV). Residues 185–216 (IEKQQKKKREEEEDDNDKINKTSSSSSSSSSA) form a disordered region. Asn204 carries N-linked (GlcNAc...) asparagine glycosylation. A compositionally biased stretch (low complexity) spans 205-216 (KTSSSSSSSSSA). Residues 264-284 (YGLHWNFFFTLGFVSISLAFL) traverse the membrane as a helical segment. Asn289 is a glycosylation site (N-linked (GlcNAc...) asparagine). Transmembrane regions (helical) follow at residues 290-310 (ISAI…NSFG), 331-351 (ICSF…GTEL), 364-384 (FATK…LCEI), and 399-419 (VLAI…ITLI). Residue Asn424 is glycosylated (N-linked (GlcNAc...) asparagine). The next 2 helical transmembrane spans lie at 437–457 (LFIF…MKTI) and 464–484 (SMII…ILDY).

Belongs to the PIGW family.

Its subcellular location is the endoplasmic reticulum membrane. It participates in glycolipid biosynthesis; glycosylphosphatidylinositol-anchor biosynthesis. Functionally, probable acetyltransferase, which acetylates the inositol ring of phosphatidylinositol during biosynthesis of GPI-anchor. The protein is Phosphatidylinositol-glycan biosynthesis class W protein of Dictyostelium discoideum (Social amoeba).